Reading from the N-terminus, the 199-residue chain is HTH-type transcriptional regulator BetI (199 aa).

The HTH tetR-type domain maps to 8-68 (EIRKPQLVKA…ETMREILRQL (61 aa)). Positions 31-50 (SISLISKEAGVSTGIINHYF) form a DNA-binding region, H-T-H motif.

It functions in the pathway amine and polyamine biosynthesis; betaine biosynthesis via choline pathway [regulation]. Repressor involved in the biosynthesis of the osmoprotectant glycine betaine. It represses transcription of the choline transporter BetT and the genes of BetAB involved in the synthesis of glycine betaine. This Vibrio campbellii (strain ATCC BAA-1116) protein is HTH-type transcriptional regulator BetI.